Here is a 272-residue protein sequence, read N- to C-terminus: 3-methyl-2-oxobutanoate hydroxymethyltransferase (272 aa).

2 residues coordinate Mg(2+): aspartate 43 and aspartate 82. Residues 43 to 44 (DS), aspartate 82, and lysine 112 each bind 3-methyl-2-oxobutanoate. Glutamate 114 provides a ligand contact to Mg(2+). Glutamate 179 serves as the catalytic Proton acceptor.

The protein belongs to the PanB family. As to quaternary structure, homodecamer; pentamer of dimers. Mg(2+) is required as a cofactor.

It localises to the cytoplasm. The enzyme catalyses 3-methyl-2-oxobutanoate + (6R)-5,10-methylene-5,6,7,8-tetrahydrofolate + H2O = 2-dehydropantoate + (6S)-5,6,7,8-tetrahydrofolate. The protein operates within cofactor biosynthesis; (R)-pantothenate biosynthesis; (R)-pantoate from 3-methyl-2-oxobutanoate: step 1/2. In terms of biological role, catalyzes the reversible reaction in which hydroxymethyl group from 5,10-methylenetetrahydrofolate is transferred onto alpha-ketoisovalerate to form ketopantoate. The chain is 3-methyl-2-oxobutanoate hydroxymethyltransferase from Staphylococcus aureus (strain MRSA252).